A 319-amino-acid chain; its full sequence is tRNA-cytidine(32) 2-sulfurtransferase (319 aa).

The PP-loop motif signature appears at 49 to 54; that stretch reads SGGKDS. Residues Cys124, Cys127, and Cys215 each coordinate [4Fe-4S] cluster.

Belongs to the TtcA family. As to quaternary structure, homodimer. It depends on Mg(2+) as a cofactor. [4Fe-4S] cluster serves as cofactor.

The protein localises to the cytoplasm. The enzyme catalyses cytidine(32) in tRNA + S-sulfanyl-L-cysteinyl-[cysteine desulfurase] + AH2 + ATP = 2-thiocytidine(32) in tRNA + L-cysteinyl-[cysteine desulfurase] + A + AMP + diphosphate + H(+). The protein operates within tRNA modification. Functionally, catalyzes the ATP-dependent 2-thiolation of cytidine in position 32 of tRNA, to form 2-thiocytidine (s(2)C32). The sulfur atoms are provided by the cysteine/cysteine desulfurase (IscS) system. The chain is tRNA-cytidine(32) 2-sulfurtransferase from Shewanella amazonensis (strain ATCC BAA-1098 / SB2B).